We begin with the raw amino-acid sequence, 389 residues long: Chalcone synthase E (389 aa).

The active site involves C164.

The protein belongs to the thiolase-like superfamily. Chalcone/stilbene synthases family.

The catalysed reaction is (E)-4-coumaroyl-CoA + 3 malonyl-CoA + 3 H(+) = 2',4,4',6'-tetrahydroxychalcone + 3 CO2 + 4 CoA. Its pathway is secondary metabolite biosynthesis; flavonoid biosynthesis. In terms of biological role, the primary product of this enzyme is 4,2',4',6'-tetrahydroxychalcone (also termed naringenin-chalcone or chalcone) which can under specific conditions spontaneously isomerize into naringenin. This Ipomoea purpurea (Common morning glory) protein is Chalcone synthase E (CHSE).